The following is a 243-amino-acid chain: Ribonuclease 3 (243 aa).

Residues 10–146 (VNRFRKRFDT…FIGALYLDQG (137 aa)) form the RNase III domain. Glu-59 serves as a coordination point for Mg(2+). The active site involves Asp-63. 2 residues coordinate Mg(2+): Asp-132 and Glu-135. Residue Glu-135 is part of the active site. Residues 172-241 (DFKTQFQEYV…AKSAYKQLKQ (70 aa)) enclose the DRBM domain. Positions 219–231 (GKGKTKKESEQRA) are enriched in basic and acidic residues. Residues 219 to 243 (GKGKTKKESEQRAAKSAYKQLKQIK) are disordered.

It belongs to the ribonuclease III family. In terms of assembly, homodimer. The cofactor is Mg(2+).

Its subcellular location is the cytoplasm. It catalyses the reaction Endonucleolytic cleavage to 5'-phosphomonoester.. Digests double-stranded RNA. Involved in the processing of primary rRNA transcript to yield the immediate precursors to the large and small rRNAs (23S and 16S). Processes some mRNAs, and tRNAs when they are encoded in the rRNA operon. Processes pre-crRNA and tracrRNA of type II CRISPR loci if present in the organism. The sequence is that of Ribonuclease 3 from Staphylococcus aureus (strain Mu3 / ATCC 700698).